Here is a 659-residue protein sequence, read N- to C-terminus: Alpha-amylase (659 aa).

Positions 1-27 (MFAKRFKTSLLPLFAGFLLLFHLVLAG) are cleaved as a signal peptide. A propeptide spanning residues 28-41 (PAAASAETANKSNE) is cleaved from the precursor. Positions 142, 178, 187, 210, and 212 each coordinate Ca(2+). Aspartate 217 serves as the catalytic Nucleophile. Histidine 221 provides a ligand contact to Ca(2+). Glutamate 249 acts as the Proton donor in catalysis.

Belongs to the glycosyl hydrolase 13 family. As to quaternary structure, monomer. Ca(2+) is required as a cofactor.

The protein localises to the secreted. It carries out the reaction Endohydrolysis of (1-&gt;4)-alpha-D-glucosidic linkages in polysaccharides containing three or more (1-&gt;4)-alpha-linked D-glucose units.. The protein is Alpha-amylase (amyE) of Bacillus subtilis (strain 168).